The chain runs to 454 residues: Jacalin-related lectin 37 (454 aa).

The Jacalin-type lectin domain occupies 295–438 (SRFTPPRGIQ…LTALGVHFSP (144 aa)).

Belongs to the jacalin lectin family.

This is Jacalin-related lectin 37 (JAL37) from Arabidopsis thaliana (Mouse-ear cress).